A 265-amino-acid chain; its full sequence is Putative hydro-lyase Teth514_1597 (265 aa).

This sequence belongs to the D-glutamate cyclase family.

The sequence is that of Putative hydro-lyase Teth514_1597 from Thermoanaerobacter sp. (strain X514).